The following is a 633-amino-acid chain: Rab11 family-interacting protein 4 (633 aa).

2 EF-hand domains span residues Leu-17–Gly-52 and Ala-50–Cys-85. Positions 30, 32, 34, 63, 65, 69, and 74 each coordinate Ca(2+). 2 disordered regions span residues Ser-152–Leu-182 and Gly-218–Arg-257. Positions Thr-238 to Gln-254 are enriched in polar residues. Positions Ala-410–Tyr-613 form a coiled coil. Positions Glu-570–Lys-632 constitute an FIP-RBD domain.

Homodimer. Forms a complex with Rab11 (rab11a or rab11b) and arf6.

It localises to the recycling endosome membrane. Its subcellular location is the cleavage furrow. The protein localises to the midbody. The protein resides in the cytoplasmic vesicle. Its function is as follows. Acts as a regulator of endocytic traffic by participating in membrane delivery. Required for the abscission step in cytokinesis, possibly by acting as an 'address tag' delivering recycling endosome membranes to the cleavage furrow during late cytokinesis. The polypeptide is Rab11 family-interacting protein 4 (rab11fip4) (Xenopus tropicalis (Western clawed frog)).